The primary structure comprises 121 residues: MSSPHVLVVDDTHVDRHVVSMALMRHNVRVTAVESVMQALMFLDSEHDVDMIVSDYCMPDMTGYNLLMEVKKSPKLAHLPVVIASSDNIPERIRKCLDGGAKDYILKPVKIVDVPRIMKYI.

The Response regulatory domain occupies 5–121 (HVLVVDDTHV…VDVPRIMKYI (117 aa)). Position 55 is a 4-aspartylphosphate (D55).

It belongs to the ARR family. Type-A subfamily. Two-component system major event consists of a His-to-Asp phosphorelay between a sensor histidine kinase (HK) and a response regulator (RR). In plants, the His-to-Asp phosphorelay involves an additional intermediate named Histidine-containing phosphotransfer protein (HPt). This multistep phosphorelay consists of a His-Asp-His-Asp sequential transfer of a phosphate group between first a His and an Asp of the HK protein, followed by the transfer to a conserved His of the HPt protein and finally the transfer to an Asp in the receiver domain of the RR protein. As to expression, expressed in mature leaves, and at low levels in roots, shoots and flowers.

Functions as a response regulator involved in His-to-Asp phosphorelay signal transduction system. Phosphorylation of the Asp residue in the receiver domain activates the ability of the protein to promote the transcription of target genes. Type-A response regulators seem to act as negative regulators of the cytokinin signaling. This is Two-component response regulator ORR8 from Oryza sativa subsp. indica (Rice).